The primary structure comprises 142 residues: Hemoglobin subunit alpha-2 (142 aa).

In terms of domain architecture, Globin spans 2 to 142; that stretch reads LLSADDKKHI…VSTVLTSKYR (141 aa). H59 contributes to the O2 binding site. Residue H88 coordinates heme b.

The protein belongs to the globin family. Heterotetramer of two alpha chains and two beta chains. As to expression, red blood cells.

Involved in oxygen transport from the lung to the various peripheral tissues. The sequence is that of Hemoglobin subunit alpha-2 (hba2) from Xenopus laevis (African clawed frog).